Here is a 239-residue protein sequence, read N- to C-terminus: Phosphoribosylaminoimidazole-succinocarboxamide synthase (239 aa).

This sequence belongs to the SAICAR synthetase family.

It catalyses the reaction 5-amino-1-(5-phospho-D-ribosyl)imidazole-4-carboxylate + L-aspartate + ATP = (2S)-2-[5-amino-1-(5-phospho-beta-D-ribosyl)imidazole-4-carboxamido]succinate + ADP + phosphate + 2 H(+). It functions in the pathway purine metabolism; IMP biosynthesis via de novo pathway; 5-amino-1-(5-phospho-D-ribosyl)imidazole-4-carboxamide from 5-amino-1-(5-phospho-D-ribosyl)imidazole-4-carboxylate: step 1/2. The polypeptide is Phosphoribosylaminoimidazole-succinocarboxamide synthase (Bacillus cereus (strain 03BB102)).